The chain runs to 307 residues: Aspartate carbamoyltransferase catalytic subunit (307 aa).

Carbamoyl phosphate is bound by residues R51 and T52. L-aspartate is bound at residue K80. 3 residues coordinate carbamoyl phosphate: R101, H129, and Q132. R162 and R225 together coordinate L-aspartate. 2 residues coordinate carbamoyl phosphate: L264 and P265.

The protein belongs to the aspartate/ornithine carbamoyltransferase superfamily. ATCase family. As to quaternary structure, heterododecamer (2C3:3R2) of six catalytic PyrB chains organized as two trimers (C3), and six regulatory PyrI chains organized as three dimers (R2).

The catalysed reaction is carbamoyl phosphate + L-aspartate = N-carbamoyl-L-aspartate + phosphate + H(+). It functions in the pathway pyrimidine metabolism; UMP biosynthesis via de novo pathway; (S)-dihydroorotate from bicarbonate: step 2/3. Catalyzes the condensation of carbamoyl phosphate and aspartate to form carbamoyl aspartate and inorganic phosphate, the committed step in the de novo pyrimidine nucleotide biosynthesis pathway. The polypeptide is Aspartate carbamoyltransferase catalytic subunit (Lachnoclostridium phytofermentans (strain ATCC 700394 / DSM 18823 / ISDg) (Clostridium phytofermentans)).